A 375-amino-acid polypeptide reads, in one-letter code: Histidine biosynthesis bifunctional protein HisB (375 aa).

A histidinol-phosphatase region spans residues 1–168 (MTPILFVDRD…GIAHELADAP (168 aa)). Residue D8 is the Nucleophile of the active site. The Mg(2+) site is built by D8, D10, and D128. The active-site Proton donor is D10. Residues 169 to 375 (RRAVVQRNTK…TALPSTKGAL (207 aa)) form an imidazoleglycerol-phosphate dehydratase region.

The protein in the N-terminal section; belongs to the histidinol-phosphatase family. It in the C-terminal section; belongs to the imidazoleglycerol-phosphate dehydratase family. Mg(2+) serves as cofactor.

It localises to the cytoplasm. The catalysed reaction is D-erythro-1-(imidazol-4-yl)glycerol 3-phosphate = 3-(imidazol-4-yl)-2-oxopropyl phosphate + H2O. It catalyses the reaction L-histidinol phosphate + H2O = L-histidinol + phosphate. It functions in the pathway amino-acid biosynthesis; L-histidine biosynthesis; L-histidine from 5-phospho-alpha-D-ribose 1-diphosphate: step 6/9. It participates in amino-acid biosynthesis; L-histidine biosynthesis; L-histidine from 5-phospho-alpha-D-ribose 1-diphosphate: step 8/9. The protein is Histidine biosynthesis bifunctional protein HisB of Xanthomonas campestris pv. campestris (strain B100).